The primary structure comprises 197 residues: MDQPWNANIHYDALLDAMVPLGTQCVLDVGCGDGLLAARLARRIPYVTAVDIDAPVLRRAQTRFANAPIRWLHADIMTAELPNAGFDAVVSNAALHHIEDTRTALSRLGGLVTPGGTLAVVTFVTPSLRNGLWHLTSWVACGMANRVKGKWEHSAPIKWPPPQTLHELRSHVRALLPGACIRRLLYGRVLVTWRAPV.

It belongs to the methyltransferase superfamily.

This is an uncharacterized protein from Mycobacterium bovis (strain ATCC BAA-935 / AF2122/97).